A 239-amino-acid polypeptide reads, in one-letter code: Probable transcriptional regulatory protein Pnuc_0618 (239 aa).

The segment at 1 to 21 (MAGHSKWANIQHRKGRQDEKR) is disordered.

It belongs to the TACO1 family.

Its subcellular location is the cytoplasm. In Polynucleobacter asymbioticus (strain DSM 18221 / CIP 109841 / QLW-P1DMWA-1) (Polynucleobacter necessarius subsp. asymbioticus), this protein is Probable transcriptional regulatory protein Pnuc_0618.